Here is a 359-residue protein sequence, read N- to C-terminus: Acyl-CoA Delta-9 desaturase (359 aa).

2 consecutive transmembrane segments (helical) span residues 51–71 (VILF…AFTS) and 74–94 (IATT…ITGG). Residues His96, His101, His133, His136, and His137 each contribute to the Fe cation site. Residues 96–101 (HRLWAH) carry the Histidine box-1 motif. The short motif at 133–137 (HRVHH) is the Histidine box-2 element. Transmembrane regions (helical) follow at residues 194–214 (YLIL…VYMW) and 222–244 (WFVA…NSAA). The Fe cation site is built by His245, His274, His277, and His278. The Histidine box-3 motif lies at 274–278 (HNYHH).

It belongs to the fatty acid desaturase type 1 family. Fe(2+) serves as cofactor.

The protein resides in the membrane. It catalyses the reaction octadecanoyl-CoA + 2 Fe(II)-[cytochrome b5] + O2 + 2 H(+) = (9Z)-octadecenoyl-CoA + 2 Fe(III)-[cytochrome b5] + 2 H2O. The enzyme catalyses hexadecanoyl-CoA + 2 Fe(II)-[cytochrome b5] + O2 + 2 H(+) = (9Z)-hexadecenoyl-CoA + 2 Fe(III)-[cytochrome b5] + 2 H2O. Its function is as follows. Catalyzes the formation of a Delta9 double bond, acting on saturated fatty acyl substrates like palmitoyl-CoA (hexadecanoyl-CoA) and stearoyl-CoA (octadecanoyl-CoA) with higher desaturation activity on octadecanoyl-CoA than hexadecanoyl-CoA. This chain is Acyl-CoA Delta-9 desaturase, found in Acheta domesticus (House cricket).